A 618-amino-acid chain; its full sequence is DNA mismatch repair protein MutL (618 aa).

The tract at residues 367–402 (EPTTAREPATPRYSGGASGGNGGRQTAGGWPHAQPG) is disordered. Positions 382 to 392 (GASGGNGGRQT) are enriched in gly residues.

The protein belongs to the DNA mismatch repair MutL/HexB family.

Its function is as follows. This protein is involved in the repair of mismatches in DNA. It is required for dam-dependent methyl-directed DNA mismatch repair. May act as a 'molecular matchmaker', a protein that promotes the formation of a stable complex between two or more DNA-binding proteins in an ATP-dependent manner without itself being part of a final effector complex. This chain is DNA mismatch repair protein MutL, found in Salmonella paratyphi A (strain ATCC 9150 / SARB42).